The chain runs to 890 residues: Alanine--tRNA ligase (890 aa).

4 residues coordinate Zn(2+): His-573, His-577, Cys-676, and His-680.

This sequence belongs to the class-II aminoacyl-tRNA synthetase family. The cofactor is Zn(2+).

It localises to the cytoplasm. It catalyses the reaction tRNA(Ala) + L-alanine + ATP = L-alanyl-tRNA(Ala) + AMP + diphosphate. Its function is as follows. Catalyzes the attachment of alanine to tRNA(Ala) in a two-step reaction: alanine is first activated by ATP to form Ala-AMP and then transferred to the acceptor end of tRNA(Ala). Also edits incorrectly charged Ser-tRNA(Ala) and Gly-tRNA(Ala) via its editing domain. The chain is Alanine--tRNA ligase from Corynebacterium efficiens (strain DSM 44549 / YS-314 / AJ 12310 / JCM 11189 / NBRC 100395).